The primary structure comprises 151 residues: Cell division protein SepF (151 aa).

Over residues 17–29 the composition is skewed to acidic residues; it reads DNEDDYQDQEDEQ. Residues 17–42 are disordered; it reads DNEDDYQDQEDEQAQQPAPEQPVDNH.

This sequence belongs to the SepF family. As to quaternary structure, homodimer. Interacts with FtsZ.

It is found in the cytoplasm. Functionally, cell division protein that is part of the divisome complex and is recruited early to the Z-ring. Probably stimulates Z-ring formation, perhaps through the cross-linking of FtsZ protofilaments. Its function overlaps with FtsA. In Lacticaseibacillus casei (strain BL23) (Lactobacillus casei), this protein is Cell division protein SepF.